We begin with the raw amino-acid sequence, 154 residues long: Nuclear cap-binding protein subunit 2 (154 aa).

Residues Tyr10, Tyr33, 102 to 106 (RCDWD), 113 to 117 (RQYGR), and 123 to 124 (QV) each bind mRNA. The RRM domain maps to 30-108 (STLYMGNLSF…RIIRCDWDAG (79 aa)).

Belongs to the RRM NCBP2 family. In terms of assembly, component of the nuclear cap-binding complex (CBC), a heterodimer composed of Cbp80 and Cbp20 that interacts with m7GpppG-capped RNA.

The protein localises to the nucleus. Component of the cap-binding complex (CBC), which binds co-transcriptionally to the 5' cap of pre-mRNAs and is involved in various processes such as pre-mRNA splicing and RNA-mediated gene silencing (RNAi). The CBC complex is involved in miRNA-mediated RNA interference and is required for primary microRNAs (miRNAs) processing. Also involved in innate immunity via the short interfering RNAs (siRNAs) processing machinery by restricting the viral RNA production. In the CBC complex, Cbp20 recognizes and binds capped RNAs (m7GpppG-capped RNA) but requires Cbp80 to stabilize the movement of its N-terminal loop and lock the CBC into a high affinity cap-binding state with the cap structure. In Bombyx mori (Silk moth), this protein is Nuclear cap-binding protein subunit 2.